The sequence spans 226 residues: Ribonuclease 3 (226 aa).

The RNase III domain maps to 6–128; the sequence is INRLQRKLGY…LIGAIFLDSD (123 aa). Glu41 contacts Mg(2+). The active site involves Asp45. Residues Asp114 and Glu117 each contribute to the Mg(2+) site. Residue Glu117 is part of the active site. In terms of domain architecture, DRBM spans 155 to 225; the sequence is DPKTRLQEYL…AEQALKQLEL (71 aa).

This sequence belongs to the ribonuclease III family. In terms of assembly, homodimer. Mg(2+) serves as cofactor.

Its subcellular location is the cytoplasm. It catalyses the reaction Endonucleolytic cleavage to 5'-phosphomonoester.. Its function is as follows. Digests double-stranded RNA. Involved in the processing of primary rRNA transcript to yield the immediate precursors to the large and small rRNAs (23S and 16S). Processes some mRNAs, and tRNAs when they are encoded in the rRNA operon. Processes pre-crRNA and tracrRNA of type II CRISPR loci if present in the organism. This chain is Ribonuclease 3, found in Photorhabdus laumondii subsp. laumondii (strain DSM 15139 / CIP 105565 / TT01) (Photorhabdus luminescens subsp. laumondii).